Reading from the N-terminus, the 99-residue chain is MAMLTLEEIESILTAHKKELRERFGVREIGVFGSYVRGEAKEDSDVDILVDFEEIPSLLKFIELEEYLEALLGLRVDLVMKSSLKSGIAKTVLREVVYV.

The GSX(10)DXD motif motif lies at 33-47 (GSYVRGEAKEDSDVD). Residues aspartate 45 and aspartate 47 contribute to the active site. Positions 45, 47, and 77 each coordinate Mg(2+).

This sequence belongs to the MntA antitoxin family. Mg(2+) is required as a cofactor.

The enzyme catalyses L-tyrosyl-[protein] + ATP = O-(5'-adenylyl)-L-tyrosyl-[protein] + diphosphate. The catalysed reaction is O-(5'-adenylyl)-L-tyrosyl-[protein] + ATP = O-[5'-(adenylyl-(5'-&gt;3')-adenylyl)]-L-tyrosyl-[protein] + diphosphate. Functionally, antitoxin component of a type VII toxin-antitoxin (TA) system. Overexpression in E.coli neutralizes the toxic effect of cognate toxin HepT. Neutralization is mostly due to AMPylation of the toxin by this enzyme. The protein is Protein adenylyltransferase MntA of Thermococcus cleftensis (strain DSM 27260 / KACC 17922 / CL1).